Consider the following 501-residue polypeptide: Lysine--tRNA ligase (501 aa).

2 residues coordinate Mg(2+): E404 and E411.

Belongs to the class-II aminoacyl-tRNA synthetase family. In terms of assembly, homodimer. Mg(2+) serves as cofactor.

It is found in the cytoplasm. The enzyme catalyses tRNA(Lys) + L-lysine + ATP = L-lysyl-tRNA(Lys) + AMP + diphosphate. This chain is Lysine--tRNA ligase, found in Campylobacter jejuni subsp. jejuni serotype O:6 (strain 81116 / NCTC 11828).